Reading from the N-terminus, the 831-residue chain is Glycerol-3-phosphate acyltransferase (831 aa).

Residues 304-309 carry the HXXXXD motif motif; the sequence is CHRSHM. A disordered region spans residues 801–831; that stretch reads VSMPAETSNQPEAPETPETPETPEPEGKTES.

The protein belongs to the GPAT/DAPAT family.

It is found in the cell inner membrane. The catalysed reaction is sn-glycerol 3-phosphate + an acyl-CoA = a 1-acyl-sn-glycero-3-phosphate + CoA. It functions in the pathway phospholipid metabolism; CDP-diacylglycerol biosynthesis; CDP-diacylglycerol from sn-glycerol 3-phosphate: step 1/3. This Yersinia pseudotuberculosis serotype IB (strain PB1/+) protein is Glycerol-3-phosphate acyltransferase.